The primary structure comprises 306 residues: Aspartate carbamoyltransferase catalytic subunit (306 aa).

Residues Arg55 and Thr56 each coordinate carbamoyl phosphate. Position 84 (Lys84) interacts with L-aspartate. Residues Arg105, His133, and Gln136 each contribute to the carbamoyl phosphate site. L-aspartate contacts are provided by Arg166 and Arg227. Leu265 and Pro266 together coordinate carbamoyl phosphate.

This sequence belongs to the aspartate/ornithine carbamoyltransferase superfamily. ATCase family. Heterododecamer (2C3:3R2) of six catalytic PyrB chains organized as two trimers (C3), and six regulatory PyrI chains organized as three dimers (R2).

It catalyses the reaction carbamoyl phosphate + L-aspartate = N-carbamoyl-L-aspartate + phosphate + H(+). It participates in pyrimidine metabolism; UMP biosynthesis via de novo pathway; (S)-dihydroorotate from bicarbonate: step 2/3. Functionally, catalyzes the condensation of carbamoyl phosphate and aspartate to form carbamoyl aspartate and inorganic phosphate, the committed step in the de novo pyrimidine nucleotide biosynthesis pathway. The chain is Aspartate carbamoyltransferase catalytic subunit from Neisseria meningitidis serogroup C / serotype 2a (strain ATCC 700532 / DSM 15464 / FAM18).